Reading from the N-terminus, the 160-residue chain is SsrA-binding protein (160 aa).

It belongs to the SmpB family.

The protein localises to the cytoplasm. In terms of biological role, required for rescue of stalled ribosomes mediated by trans-translation. Binds to transfer-messenger RNA (tmRNA), required for stable association of tmRNA with ribosomes. tmRNA and SmpB together mimic tRNA shape, replacing the anticodon stem-loop with SmpB. tmRNA is encoded by the ssrA gene; the 2 termini fold to resemble tRNA(Ala) and it encodes a 'tag peptide', a short internal open reading frame. During trans-translation Ala-aminoacylated tmRNA acts like a tRNA, entering the A-site of stalled ribosomes, displacing the stalled mRNA. The ribosome then switches to translate the ORF on the tmRNA; the nascent peptide is terminated with the 'tag peptide' encoded by the tmRNA and targeted for degradation. The ribosome is freed to recommence translation, which seems to be the essential function of trans-translation. This Salmonella agona (strain SL483) protein is SsrA-binding protein.